A 425-amino-acid chain; its full sequence is Glutamyl-tRNA reductase (425 aa).

Substrate contacts are provided by residues 49–52 (TCNR), S107, 112–114 (EPQ), and Q118. The active-site Nucleophile is C50. 187–192 (GAGETI) serves as a coordination point for NADP(+).

Belongs to the glutamyl-tRNA reductase family. As to quaternary structure, homodimer.

The enzyme catalyses (S)-4-amino-5-oxopentanoate + tRNA(Glu) + NADP(+) = L-glutamyl-tRNA(Glu) + NADPH + H(+). Its pathway is porphyrin-containing compound metabolism; protoporphyrin-IX biosynthesis; 5-aminolevulinate from L-glutamyl-tRNA(Glu): step 1/2. Catalyzes the NADPH-dependent reduction of glutamyl-tRNA(Glu) to glutamate 1-semialdehyde (GSA). The chain is Glutamyl-tRNA reductase from Pseudomonas putida (strain W619).